The sequence spans 519 residues: Serine/threonine-protein kinase RIO1 (519 aa).

A compositionally biased stretch (pro residues) spans 1–10; it reads MTPAPEPQDP. Positions 1–54 are disordered; that stretch reads MTPAPEPQDPPTIHEPVATEQTDDISDWDVESDYEDGYGAPSKSQAQGGASAAD. The span at 21-36 shows a compositional bias: acidic residues; the sequence is QTDDISDWDVESDYED. Positions 39-53 are enriched in low complexity; the sequence is GAPSKSQAQGGASAA. The 398-residue stretch at 122–519 folds into the Protein kinase domain; it reads SEIYGTISTG…KLVAANKKRK (398 aa). ATP contacts are provided by Lys154 and Leu228. The active-site Proton acceptor is the Asp281. Positions 286 and 298 each coordinate Mg(2+). Asp298 acts as the 4-aspartylphosphate intermediate in catalysis. Residues 418 to 519 are disordered; it reads ADSKVPESTG…KLVAANKKRK (102 aa). The span at 439 to 464 shows a compositional bias: acidic residues; it reads GSEDEEGDEGESGEVESGDEEREEGE. Positions 440–519 are association with (pre-)40S ribosomal particle; it reads SEDEEGDEGE…KLVAANKKRK (80 aa). Basic residues-rich tracts occupy residues 470–489 and 497–519; these read KKRPRGKKHLDKAEKHAHKM and EKRKEKMPKHVKKKLVAANKKRK.

This sequence belongs to the protein kinase superfamily. RIO-type Ser/Thr kinase family. Mg(2+) is required as a cofactor. In terms of processing, autophosphorylated.

It is found in the cytoplasm. The catalysed reaction is L-seryl-[protein] + ATP = O-phospho-L-seryl-[protein] + ADP + H(+). It carries out the reaction L-threonyl-[protein] + ATP = O-phospho-L-threonyl-[protein] + ADP + H(+). It catalyses the reaction ATP + H2O = ADP + phosphate + H(+). Its function is as follows. Involved in the final steps of cytoplasmic maturation of the 40S ribosomal subunit. In vitro, has strong ATPase activity and only low protein kinase activity. The chain is Serine/threonine-protein kinase RIO1 from Chaetomium thermophilum (strain DSM 1495 / CBS 144.50 / IMI 039719) (Thermochaetoides thermophila).